The following is a 290-amino-acid chain: Small ribosomal subunit biogenesis GTPase RsgA (290 aa).

Residues 62 to 219 enclose the CP-type G domain; the sequence is DNYLIRPQVA…VVDTPGFSTL (158 aa). GTP contacts are provided by residues 111-114 and 162-170; these read NKID and GPSGVGKST. Zn(2+) is bound by residues Cys243, Cys248, His250, and Cys256.

It belongs to the TRAFAC class YlqF/YawG GTPase family. RsgA subfamily. As to quaternary structure, monomer. Associates with 30S ribosomal subunit, binds 16S rRNA. Zn(2+) is required as a cofactor.

It is found in the cytoplasm. One of several proteins that assist in the late maturation steps of the functional core of the 30S ribosomal subunit. Helps release RbfA from mature subunits. May play a role in the assembly of ribosomal proteins into the subunit. Circularly permuted GTPase that catalyzes slow GTP hydrolysis, GTPase activity is stimulated by the 30S ribosomal subunit. The chain is Small ribosomal subunit biogenesis GTPase RsgA from Clostridium novyi (strain NT).